Reading from the N-terminus, the 494-residue chain is GTPase Der (494 aa).

EngA-type G domains follow at residues Pro-3 to Glu-166 and Ile-207 to Thr-380. Residues Gly-9–Ser-16, Asp-56–Ile-60, Asn-118–Asp-121, Gly-213–Ser-220, Asp-260–Val-264, and Asn-325–Asp-328 contribute to the GTP site. The region spanning Lys-381–Glu-465 is the KH-like domain.

This sequence belongs to the TRAFAC class TrmE-Era-EngA-EngB-Septin-like GTPase superfamily. EngA (Der) GTPase family. Associates with the 50S ribosomal subunit.

Its function is as follows. GTPase that plays an essential role in the late steps of ribosome biogenesis. The polypeptide is GTPase Der (Yersinia enterocolitica serotype O:8 / biotype 1B (strain NCTC 13174 / 8081)).